The sequence spans 387 residues: Oxidase FUB9 (387 aa).

The tract at residues 1 to 20 is disordered; it reads MSRTNLPIQPAKMSDATSSK. An FMN hydroxy acid dehydrogenase domain is found at 18–379; the sequence is SSKPQIFSIQ…TPAHLSLLNA (362 aa). An a 2-oxocarboxylate-binding site is contributed by Tyr-44. Ser-126, Gln-150, and Thr-178 together coordinate FMN. An a 2-oxocarboxylate-binding site is contributed by Arg-187. Lys-250 lines the FMN pocket. His-274 (proton acceptor) is an active-site residue. Residue Arg-277 participates in a 2-oxocarboxylate binding. FMN contacts are provided by residues 305-309 and 328-329; these read DGGFR and GR.

This sequence belongs to the FMN-dependent alpha-hydroxy acid dehydrogenase family. FMN is required as a cofactor.

It functions in the pathway mycotoxin biosynthesis. Functionally, oxidase; part of the gene cluster that mediates the biosynthesis of fusaric acid, a mycotoxin with low to moderate toxicity to animals and humans, but with high phytotoxic properties. L-aspartate is suggested as fusaric acid amino acid precursor that is activated and further processed to O-acetyl-L-homoserine by cluster enzymes aspartate kinase FUB3 and homoserine O-acetyltransferase FUB5, as well as enzymes of the primary metabolism. The polyketide synthase (PKS) FUB1 generates the triketide trans-2-hexenal which is presumptively released by the hydrolase FUB4 and linked to the NRPS-bound amino acid precursor by NAD(P)-dependent dehydrogenase FUB6. FUB1, FUB4, and the non-canonical NRPS Fub8 may form an enzyme complex. Further processing of the NRPS-bound intermediate might be carried out by FUB6 and the sulfhydrylase FUB7, enabling a spontaneous electrocyclization to close the carbon backbone of fusaric acid. Dihydrofusaric acid is likely to be released via reduction by the thioester reductase (TR) domain of FUB8 whereupon the final oxidation to fusaric acid may (also) be performed by the FMN-dependent dehydrogenase FUB9. The chain is Oxidase FUB9 from Gibberella moniliformis (strain M3125 / FGSC 7600) (Maize ear and stalk rot fungus).